Consider the following 717-residue polypeptide: Probable metal-nicotianamine transporter YSL12 (717 aa).

The segment at 1–56 (MASHANASGGGGDEEMVEASTLRHRHGAGKDANGVGTERQLAAAAAEGEEEGPSSV) is disordered. The next 14 helical transmembrane spans lie at 76-96 (AFVV…KLNL), 99-119 (GIIP…VRLW), 144-164 (CVVA…LFGM), 186-206 (IGWM…ALVP), 248-268 (LGKF…YTAG), 306-326 (IVNV…WPLI), 351-371 (VFIS…KVLI), 422-442 (VAFG…PQIF), 450-470 (ILVA…GAGL), 482-502 (LAIF…LVGL), 536-556 (FVSQ…VFWL), 593-613 (LPKH…AINL), 636-656 (FYIG…LFVW), and 671-691 (VASG…ILAL).

Belongs to the YSL (TC 2.A.67.2) family. In terms of tissue distribution, expressed in root cortex and stele.

It localises to the membrane. Its function is as follows. May be involved in the transport of nicotianamine-chelated metals. This Oryza sativa subsp. japonica (Rice) protein is Probable metal-nicotianamine transporter YSL12 (YSL12).